The sequence spans 89 residues: UPF0298 protein GTNG_0961 (89 aa).

It belongs to the UPF0298 family.

It localises to the cytoplasm. This chain is UPF0298 protein GTNG_0961, found in Geobacillus thermodenitrificans (strain NG80-2).